Reading from the N-terminus, the 257-residue chain is 3-deoxy-manno-octulosonate cytidylyltransferase (257 aa).

Belongs to the KdsB family.

Its subcellular location is the cytoplasm. It catalyses the reaction 3-deoxy-alpha-D-manno-oct-2-ulosonate + CTP = CMP-3-deoxy-beta-D-manno-octulosonate + diphosphate. It functions in the pathway nucleotide-sugar biosynthesis; CMP-3-deoxy-D-manno-octulosonate biosynthesis; CMP-3-deoxy-D-manno-octulosonate from 3-deoxy-D-manno-octulosonate and CTP: step 1/1. The protein operates within bacterial outer membrane biogenesis; lipopolysaccharide biosynthesis. Its function is as follows. Activates KDO (a required 8-carbon sugar) for incorporation into bacterial lipopolysaccharide in Gram-negative bacteria. This Chromohalobacter salexigens (strain ATCC BAA-138 / DSM 3043 / CIP 106854 / NCIMB 13768 / 1H11) protein is 3-deoxy-manno-octulosonate cytidylyltransferase.